A 124-amino-acid chain; its full sequence is uncharacterized protein (124 aa).

Residues 82 to 124 (SDLGIEGGERAQGQNAHSVHGPGLQTERGGSQLQMVGHPLREL) form a disordered region.

This is an uncharacterized protein from Human cytomegalovirus (strain AD169) (HHV-5).